The following is a 61-amino-acid chain: uncharacterized protein (61 aa).

This is an uncharacterized protein from Treponema pallidum (strain Nichols).